The chain runs to 152 residues: Deoxyuridine 5'-triphosphate nucleotidohydrolase (152 aa).

Substrate contacts are provided by residues 71–73, Asn84, 88–90, and Met98; these read RSG and LID.

Belongs to the dUTPase family. Mg(2+) is required as a cofactor.

It carries out the reaction dUTP + H2O = dUMP + diphosphate + H(+). The protein operates within pyrimidine metabolism; dUMP biosynthesis; dUMP from dCTP (dUTP route): step 2/2. Its function is as follows. This enzyme is involved in nucleotide metabolism: it produces dUMP, the immediate precursor of thymidine nucleotides and it decreases the intracellular concentration of dUTP so that uracil cannot be incorporated into DNA. This chain is Deoxyuridine 5'-triphosphate nucleotidohydrolase, found in Photorhabdus laumondii subsp. laumondii (strain DSM 15139 / CIP 105565 / TT01) (Photorhabdus luminescens subsp. laumondii).